A 251-amino-acid chain; its full sequence is uncharacterized protein (251 aa).

Positions 3 to 58 (TPERHQLIIDQIEKHDVVKIQELINLTNASESTIRRDLSTLEERGFLKRVHGGAAK) constitute an HTH deoR-type domain. The H-T-H motif DNA-binding region spans 20-39 (VKIQELINLTNASESTIRRD).

This is an uncharacterized protein from Bacillus subtilis (strain 168).